The sequence spans 515 residues: Probable coatomer subunit delta (515 aa).

Basic and acidic residues predominate over residues 161-180 (AKQAMAEKAKELKRAQKEAL). Positions 161 to 231 (AKQAMAEKAK…GGKALKLGGK (71 aa)) are disordered. A compositionally biased stretch (low complexity) spans 187 to 198 (SYQSSTGISSSS). The 240-residue stretch at 276–515 (REVVHVRTEE…TFNSENFEIV (240 aa)) folds into the MHD domain.

This sequence belongs to the adaptor complexes medium subunit family. Delta-COP subfamily. In terms of assembly, oligomeric complex that consists of at least the alpha, beta, beta', gamma, delta, epsilon and zeta subunits.

It is found in the cytoplasm. The protein localises to the golgi apparatus membrane. The protein resides in the cytoplasmic vesicle. It localises to the COPI-coated vesicle membrane. Its function is as follows. The coatomer is a cytosolic protein complex that binds to dilysine motifs and reversibly associates with Golgi non-clathrin-coated vesicles, which further mediate biosynthetic protein transport from the ER, via the Golgi up to the trans Golgi network. Coatomer complex is required for budding from Golgi membranes, and is essential for the retrograde Golgi-to-ER transport of dilysine-tagged proteins. The chain is Probable coatomer subunit delta from Caenorhabditis elegans.